A 269-amino-acid chain; its full sequence is 2-dehydro-3-deoxyphosphooctonate aldolase (269 aa).

This sequence belongs to the KdsA family.

The protein resides in the cytoplasm. The enzyme catalyses D-arabinose 5-phosphate + phosphoenolpyruvate + H2O = 3-deoxy-alpha-D-manno-2-octulosonate-8-phosphate + phosphate. Its pathway is carbohydrate biosynthesis; 3-deoxy-D-manno-octulosonate biosynthesis; 3-deoxy-D-manno-octulosonate from D-ribulose 5-phosphate: step 2/3. It functions in the pathway bacterial outer membrane biogenesis; lipopolysaccharide biosynthesis. The protein is 2-dehydro-3-deoxyphosphooctonate aldolase of Chlamydia abortus (strain DSM 27085 / S26/3) (Chlamydophila abortus).